The sequence spans 1342 residues: DNA-directed RNA polymerase subunit beta (1342 aa).

It belongs to the RNA polymerase beta chain family. The RNAP catalytic core consists of 2 alpha, 1 beta, 1 beta' and 1 omega subunit. When a sigma factor is associated with the core the holoenzyme is formed, which can initiate transcription.

The catalysed reaction is RNA(n) + a ribonucleoside 5'-triphosphate = RNA(n+1) + diphosphate. In terms of biological role, DNA-dependent RNA polymerase catalyzes the transcription of DNA into RNA using the four ribonucleoside triphosphates as substrates. This is DNA-directed RNA polymerase subunit beta from Vibrio parahaemolyticus serotype O3:K6 (strain RIMD 2210633).